Consider the following 243-residue polypeptide: Precursor of CEP9 (243 aa).

Positions 1 to 26 are cleaved as a signal peptide; it reads MKLLSITLTSIVISMVFYQTPITTEA. The propeptide occupies 28-44; it reads SLRKTNDQDHFKAGFTD. 3 disordered regions span residues 42–63, 91–173, and 189–243; these read FTDDFVPTSPGNSPGVGHKKGN, KTGS…VKGF, and NGQD…EPKA. A Hydroxyproline; partial modification is found at Pro48. Pro51 bears the Hydroxyproline mark. The residue at position 55 (Pro55) is a Hydroxyproline; partial. Residues 60-96 constitute a propeptide that is removed on maturation; that stretch reads KKGNVNVEGFQDDFKPTEGRKLLKTNVQDHFKTGSTD. 3 positions are modified to hydroxyproline: Pro100, Pro103, and Pro107. The propeptide occupies 112-148; sequence KKGNVNVESSEDDFKHKEGRKLQQTNGQNHFKTGSTD. The segment covering 133 to 147 has biased composition (polar residues); it reads LQQTNGQNHFKTGST. A hydroxyproline mark is found at Pro152, Pro155, and Pro159. A propeptide spanning residues 164–200 is cleaved from the precursor; that stretch reads KKGHANVKGFKDDFAPTEEIRLQKMNGQDHFKTGSTD. Pro204, Pro207, and Pro211 each carry hydroxyproline. A propeptide spanning residues 216–219 is cleaved from the precursor; sequence KKGD. A hydroxyproline mark is found at Pro223, Pro226, and Pro230. A propeptide spanning residues 235-243 is cleaved from the precursor; that stretch reads AVKNDEPKA.

The protein belongs to the C-terminally encoded plant signaling peptide (CEP) family. Interacts with CEP receptors (e.g. CEPR1 and CEPR2). In terms of processing, hydroxylated peptide is more active than non-hydroxylated peptide. The mature small signaling peptide is generated by proteolytic processing of the longer precursor. Expressed in lateral root primordia and in lateral roots excluding the meristem region. Also present in the aerial tissues, such as leaf petioles and the shoot apex region.

Its subcellular location is the secreted. It is found in the extracellular space. The protein localises to the apoplast. Extracellular signaling peptide that represses primary root growth rate and significantly inhibits lateral root formation. Modulates leaf morphology. Regulates systemic nitrogen (N)-demand signaling. Mediates up-regulation of genes involved in N uptake and assimilation pathways. The protein is Precursor of CEP9 of Arabidopsis thaliana (Mouse-ear cress).